Reading from the N-terminus, the 330-residue chain is DNA-directed RNA polymerase subunit alpha (330 aa).

Residues 1 to 232 are alpha N-terminal domain (alpha-NTD); the sequence is MAILAFQKPD…YHFMLFSDEK (232 aa). An alpha C-terminal domain (alpha-CTD) region spans residues 248–330; that stretch reads EEVLHMRQLL…DISKYKLDKE (83 aa).

It belongs to the RNA polymerase alpha chain family. In terms of assembly, homodimer. The RNAP catalytic core consists of 2 alpha, 1 beta, 1 beta' and 1 omega subunit. When a sigma factor is associated with the core the holoenzyme is formed, which can initiate transcription.

The catalysed reaction is RNA(n) + a ribonucleoside 5'-triphosphate = RNA(n+1) + diphosphate. In terms of biological role, DNA-dependent RNA polymerase catalyzes the transcription of DNA into RNA using the four ribonucleoside triphosphates as substrates. This chain is DNA-directed RNA polymerase subunit alpha, found in Bacteroides thetaiotaomicron (strain ATCC 29148 / DSM 2079 / JCM 5827 / CCUG 10774 / NCTC 10582 / VPI-5482 / E50).